The chain runs to 607 residues: Chaperone protein DnaK (607 aa).

Threonine 174 bears the Phosphothreonine; by autocatalysis mark. A compositionally biased stretch (polar residues) spans 577–594 (QSAGSTAGNPGQGQSTEN). Residues 577-607 (QSAGSTAGNPGQGQSTENPGGKTIDGDYKVN) are disordered.

The protein belongs to the heat shock protein 70 family.

Functionally, acts as a chaperone. The protein is Chaperone protein DnaK of Dictyoglomus turgidum (strain DSM 6724 / Z-1310).